Here is a 323-residue protein sequence, read N- to C-terminus: Probable cell division protein WhiA (323 aa).

A DNA-binding region (H-T-H motif) is located at residues 275–309 (TLKELGEMLTTGQVSKSGINHRLRKLDQIAERLRS).

It belongs to the WhiA family.

In terms of biological role, involved in cell division and chromosome segregation. The protein is Probable cell division protein WhiA of Listeria innocua serovar 6a (strain ATCC BAA-680 / CLIP 11262).